The sequence spans 455 residues: UDP-N-acetylmuramate--L-alanine ligase (455 aa).

109–115 (GTHGKTT) contributes to the ATP binding site.

Belongs to the MurCDEF family.

Its subcellular location is the cytoplasm. It catalyses the reaction UDP-N-acetyl-alpha-D-muramate + L-alanine + ATP = UDP-N-acetyl-alpha-D-muramoyl-L-alanine + ADP + phosphate + H(+). The protein operates within cell wall biogenesis; peptidoglycan biosynthesis. Cell wall formation. This chain is UDP-N-acetylmuramate--L-alanine ligase, found in Caldicellulosiruptor bescii (strain ATCC BAA-1888 / DSM 6725 / KCTC 15123 / Z-1320) (Anaerocellum thermophilum).